We begin with the raw amino-acid sequence, 108 residues long: uncharacterized protein (108 aa).

This is an uncharacterized protein from Pasteurella multocida (strain Pm70).